A 114-amino-acid polypeptide reads, in one-letter code: As-peptide 126 (114 aa).

Positions 1–22 (MSRALICSLALLAMLVISGTYA) are cleaved as a signal peptide. 9 repeat units span residues 22-29 (ASPAANAE), 30-37 (ALAAANAE), 38-45 (ASAAANAE), 46-53 (PLAAANAE), 54-61 (PLAAANAE), 62-69 (PLAAANAD), 70-77 (PIAAANAE), 78-85 (PSAAANAE), and 86-93 (PLAAANAE). The 9 X 8 AA approximate tandem repeats of [AP]-[ILS]-[AP]-A-A-N-A-[DE] stretch occupies residues 22–93 (ASPAANAEAL…AEPLAAANAE (72 aa)). The propeptide occupies 23 to 104 (SPAANAEALA…SAGPSPLAAA (82 aa)). A compositionally biased stretch (low complexity) spans 82 to 96 (ANAEPLAAANAEPSA). The interval 82–114 (ANAEPLAAANAEPSAGPSPLAAAQDPPVVKMKG) is disordered. Q105 bears the Pyrrolidone carboxylic acid mark. Lysine amide is present on K113.

Expressed by the venom gland.

It is found in the secreted. The sequence is that of As-peptide 126 from Anoplius samariensis (Solitary wasp).